The following is a 309-amino-acid chain: uncharacterized protein (309 aa).

Positions 1-16 are enriched in basic residues; that stretch reads MAGNSRRRGAVRKAGT. A disordered region spans residues 1–70; sequence MAGNSRRRGA…AKRTEETETV (70 aa). Residues Gly261, Ile281, and Leu290 each coordinate S-adenosyl-L-methionine.

This sequence belongs to the class IV-like SAM-binding methyltransferase superfamily. RNA methyltransferase TrmH family.

This is an uncharacterized protein from Mycobacterium avium (strain 104).